The primary structure comprises 274 residues: MELEKHTHLGKATEYPEEYSPSWLTPIPRAKSRETLGLSGKPDFVGEDLWNGYELSWLNSKGKPEVALGVFRIRCDSLNIIESKSFKLYLNSFNQSRFTSREEVEALMRKDLSAAAQGEVSVTLLSVTDWRDEPSFWRDAENLDVLDIDVDVYTPDASLLPDPVGDDVVEETLSSDLLKSNCPVTGQPDWATLYIHYRGKPLEKAALLKYIVSMRSHQDFHEHCVESVYLTLMQRYQPEKLAVYARYTRRGGLDINPLRSNYPLAADNFKLPRQ.

81–83 (IES) lines the substrate pocket. 83–84 (SK) is an NADPH binding site. Cys-182 acts as the Thioimide intermediate in catalysis. Catalysis depends on Asp-189, which acts as the Proton donor. 221–222 (HE) contacts substrate. An NADPH-binding site is contributed by 250-251 (RG).

The protein belongs to the GTP cyclohydrolase I family. QueF type 2 subfamily. As to quaternary structure, homodimer.

It localises to the cytoplasm. It carries out the reaction 7-aminomethyl-7-carbaguanine + 2 NADP(+) = 7-cyano-7-deazaguanine + 2 NADPH + 3 H(+). The protein operates within tRNA modification; tRNA-queuosine biosynthesis. Catalyzes the NADPH-dependent reduction of 7-cyano-7-deazaguanine (preQ0) to 7-aminomethyl-7-deazaguanine (preQ1). This is NADPH-dependent 7-cyano-7-deazaguanine reductase from Hahella chejuensis (strain KCTC 2396).